The primary structure comprises 493 residues: UDP-N-acetylmuramate--L-alanine ligase (493 aa).

112 to 118 provides a ligand contact to ATP; that stretch reads GTHGKTT.

The protein belongs to the MurCDEF family.

Its subcellular location is the cytoplasm. It catalyses the reaction UDP-N-acetyl-alpha-D-muramate + L-alanine + ATP = UDP-N-acetyl-alpha-D-muramoyl-L-alanine + ADP + phosphate + H(+). The protein operates within cell wall biogenesis; peptidoglycan biosynthesis. Cell wall formation. In Nitrosospira multiformis (strain ATCC 25196 / NCIMB 11849 / C 71), this protein is UDP-N-acetylmuramate--L-alanine ligase.